Consider the following 221-residue polypeptide: Endo-1,4-beta-xylanase I (221 aa).

Residues 1–30 (MVSFTSIITAAVAATGALAAPATDVSLVAR) form the signal peptide. The GH11 domain occupies 31–219 (QNTPNGEGTH…STGNAQITVN (189 aa)). Glu-115 serves as the catalytic Nucleophile. Positions 126-157 (DPSSQSQNKGTVTSDGSSYKIAQSTRTNQPSI) are disordered. The active-site Proton donor is the Glu-206.

Belongs to the glycosyl hydrolase 11 (cellulase G) family. Post-translationally, the N-terminus is blocked.

The protein resides in the secreted. It catalyses the reaction Endohydrolysis of (1-&gt;4)-beta-D-xylosidic linkages in xylans.. Its pathway is glycan degradation; xylan degradation. Its function is as follows. Major xylan-degrading enzyme. Contributes to the hydrolysis of arabinoxylan, the major component of maize cell-walls. This Cochliobolus carbonum (Maize leaf spot fungus) protein is Endo-1,4-beta-xylanase I (XYL1).